A 567-amino-acid chain; its full sequence is ERO1-like protein 2 (567 aa).

An N-terminal signal peptide occupies residues 1–22; that stretch reads MKIAKGLVGLLILYKNVCQVLC. N-linked (GlcNAc...) asparagine glycosylation is present at Asn-49. 4 disulfides stabilise this stretch: Cys-88–Cys-386, Cys-98–Cys-103, Cys-154–Cys-325, and Cys-389–Cys-392. FAD-binding residues include Arg-188, Thr-190, Trp-201, Ser-258, His-261, and Lys-290. The active-site Nucleophile is Cys-389. Residue Cys-392 is part of the active site. N-linked (GlcNAc...) asparagine glycosylation occurs at Asn-546.

This sequence belongs to the EROs family. May function both as a monomer and a homodimer. FAD serves as cofactor. In terms of processing, N-glycosylated.

It localises to the endoplasmic reticulum membrane. Its function is as follows. Essential oxidoreductase that oxidizes proteins in the endoplasmic reticulum to produce disulfide bonds. Acts by oxidizing directly pdi1 isomerase through a direct disulfide exchange. Does not act as a direct oxidant of folding substrate, but relies on pdi1 to transfer oxidizing equivalent. Does not oxidize all pdi related proteins, suggesting that it can discriminate between pdi1 and related proteins. Its reoxidation probably involves electron transfer to molecular oxygen via FAD. Acts independently of glutathione. May be responsible for a significant proportion of reactive oxygen species (ROS) in the cell, thereby being a source of oxidative stress. The sequence is that of ERO1-like protein 2 (ero12) from Schizosaccharomyces pombe (strain 972 / ATCC 24843) (Fission yeast).